The primary structure comprises 160 residues: SsrA-binding protein (160 aa).

This sequence belongs to the SmpB family.

The protein localises to the cytoplasm. In terms of biological role, required for rescue of stalled ribosomes mediated by trans-translation. Binds to transfer-messenger RNA (tmRNA), required for stable association of tmRNA with ribosomes. tmRNA and SmpB together mimic tRNA shape, replacing the anticodon stem-loop with SmpB. tmRNA is encoded by the ssrA gene; the 2 termini fold to resemble tRNA(Ala) and it encodes a 'tag peptide', a short internal open reading frame. During trans-translation Ala-aminoacylated tmRNA acts like a tRNA, entering the A-site of stalled ribosomes, displacing the stalled mRNA. The ribosome then switches to translate the ORF on the tmRNA; the nascent peptide is terminated with the 'tag peptide' encoded by the tmRNA and targeted for degradation. The ribosome is freed to recommence translation, which seems to be the essential function of trans-translation. The chain is SsrA-binding protein from Mycobacterium bovis (strain ATCC BAA-935 / AF2122/97).